The primary structure comprises 484 residues: Tubulin-like protein TubZ (484 aa).

32–33 (QK) contributes to the GTP binding site. Asp-64 provides a ligand contact to Mg(2+). GTP-binding positions include 140–142 (GVG), Asn-213, Lys-237, and Asn-241. Positions 408 to 484 (RKQDEEKVDI…LKTSNPFKKR (77 aa)) are required to bind TubR-DNA complex. Residues 428–484 (TFNPYNKNQGFGGASRFSGGKNSAFKRQTSEATSTQNQQEEENIISTLKTSNPFKKR) form a disordered region. Polar residues predominate over residues 452–484 (FKRQTSEATSTQNQQEEENIISTLKTSNPFKKR).

Belongs to the FtsZ family. TubZ subfamily. In terms of assembly, forms filaments; a 2-stranded filament forms with the non-hydrolyzable GTP-gamma-S which is probably a precursor to the 4-stranded filament that forms in the presence of GTP. The 4-stranded form binds GDP. In vivo polymerizes to form dynamic filaments that often extend from one cell pole to the other, moving in a unidirectional manner. Filaments polymerize at the plus end and depolymerize at the minus end, a process called treadmilling. Polymerization only occurs above a critical concentration, it does not require upstream tubR. The tubC DNA-TubR complex binds to TubZ. The cofactor is Mg(2+).

It is found in the cytoplasm. The enzyme catalyses GTP + H2O = GDP + phosphate + H(+). Its activity is regulated as follows. GTPase is inhibited by GTP-gamma-S, which also stabilizes filaments. Its function is as follows. A tubulin-like, filament forming GTPase; the motor component of the type III plasmid partition system which ensures correct segregation of the pBtoxis plasmid. Filaments may seed from the centromere-like site (tubC) when bound by DNA-binding protein TubR; the tubC-TubR complex stabilizes the TubZ filament. Filaments grow at the plus end and depolymerize at the minus end, a process called treadmilling. TubR-tubC complexes track the depolymerizing minus end of the filament, probably pulling plasmid within the cell. Required for pBtoxis plasmid replication/partition. Binds the TubR-tubC complex; GTP is not required for binding to TubR-tubC. TubZ alone does not bind DNA. Has a high GTPase activity in the presence of Mg(2+); in the presence of GTP assembles into dynamic filaments which upon polymerization bind almost exclusively GDP. Filament formation is cooperative, requiring a critical concentration. Formation occurs very quickly and is followed by disassembly as GTP is consumed. The chain is Tubulin-like protein TubZ from Bacillus thuringiensis subsp. israelensis.